We begin with the raw amino-acid sequence, 178 residues long: Fimbrial adapter PapK (178 aa).

A signal peptide spans 1–21 (MIKSTGALLLFAALSAGQAIA).

The protein localises to the secreted. It localises to the fimbrium. Adapter that links the pilus rod to the base of the tip fibrillum. Regulates the length of the tip fibrillum and joins it to the pilus rod. Pili are polar filaments radiating from the surface of the bacterium to a length of 0.5-1.5 micrometers and numbering 100-300 per cell, and enable bacteria to colonize the epithelium of specific host organs. This chain is Fimbrial adapter PapK (papK), found in Escherichia coli O6:H1 (strain CFT073 / ATCC 700928 / UPEC).